The chain runs to 319 residues: Thiamine-monophosphate kinase (319 aa).

Mg(2+)-binding residues include aspartate 28, threonine 43, threonine 44, and aspartate 45. Histidine 52 lines the substrate pocket. Aspartate 73 is a Mg(2+) binding site. Residues tyrosine 104, 121 to 122, and arginine 145 contribute to the ATP site; that span reads GD. Aspartate 122 provides a ligand contact to Mg(2+). Aspartate 218 is a Mg(2+) binding site. Residue serine 220 participates in ATP binding. Aspartate 221 lines the Mg(2+) pocket. Residues glutamate 268 and tyrosine 315 each contribute to the substrate site.

The protein belongs to the thiamine-monophosphate kinase family.

It catalyses the reaction thiamine phosphate + ATP = thiamine diphosphate + ADP. The protein operates within cofactor biosynthesis; thiamine diphosphate biosynthesis; thiamine diphosphate from thiamine phosphate: step 1/1. Catalyzes the ATP-dependent phosphorylation of thiamine-monophosphate (TMP) to form thiamine-pyrophosphate (TPP), the active form of vitamin B1. The polypeptide is Thiamine-monophosphate kinase (Methanocaldococcus jannaschii (strain ATCC 43067 / DSM 2661 / JAL-1 / JCM 10045 / NBRC 100440) (Methanococcus jannaschii)).